We begin with the raw amino-acid sequence, 203 residues long: CASP-like protein 2U2 (203 aa).

The segment at 1–21 is disordered; it reads MGGFVDDGAAGLAPSHGSSRA. At 1 to 27 the chain is on the cytoplasmic side; it reads MGGFVDDGAAGLAPSHGSSRAGRGLEG. Residues 28–48 form a helical membrane-spanning segment; sequence AGVFLRFVASLLSIAGLMLLV. Residues 49–73 are Extracellular-facing; the sequence is KDNQTVQQMVATEAVTLETKYSDIS. Residue asparagine 51 is glycosylated (N-linked (GlcNAc...) asparagine). The chain crosses the membrane as a helical span at residues 74–94; sequence AFVFLLYTNGLVAVYCFFLAL. The Cytoplasmic portion of the chain corresponds to 95-108; the sequence is ASVFSLIASARSGK. Residues 109-129 traverse the membrane as a helical segment; that stretch reads LAGWVTFVLDQGLAYVLLAAA. The Extracellular portion of the chain corresponds to 130 to 163; it reads AASTEVLYLAENGDLKTSWAEICSQFGHFCHMAR. A helical transmembrane segment spans residues 164–184; the sequence is ASIVVSFLSMLAMAVLSVMSA. Residues 185-203 are Cytoplasmic-facing; sequence QQLFSKYRRPMTAKTAQDI.

The protein belongs to the Casparian strip membrane proteins (CASP) family. In terms of assembly, homodimer and heterodimers.

It localises to the cell membrane. The polypeptide is CASP-like protein 2U2 (Osmunda lancea (Fern)).